Consider the following 104-residue polypeptide: NADH-quinone oxidoreductase subunit K (104 aa).

A run of 3 helical transmembrane segments spans residues 7–27 (LSHYLTVAAILFTLGTLGIFL), 33–53 (IVILMSVELILLAVNINLVSF), and 67–87 (LLVLTVAAAEAAIGLAILVVF).

Belongs to the complex I subunit 4L family. NDH-1 is composed of 14 different subunits. Subunits NuoA, H, J, K, L, M, N constitute the membrane sector of the complex.

Its subcellular location is the cell inner membrane. The catalysed reaction is a quinone + NADH + 5 H(+)(in) = a quinol + NAD(+) + 4 H(+)(out). Functionally, NDH-1 shuttles electrons from NADH, via FMN and iron-sulfur (Fe-S) centers, to quinones in the respiratory chain. The immediate electron acceptor for the enzyme in this species is believed to be ubiquinone. Couples the redox reaction to proton translocation (for every two electrons transferred, four hydrogen ions are translocated across the cytoplasmic membrane), and thus conserves the redox energy in a proton gradient. This is NADH-quinone oxidoreductase subunit K from Xanthobacter autotrophicus (strain ATCC BAA-1158 / Py2).